Consider the following 70-residue polypeptide: uncharacterized protein (70 aa).

The helical transmembrane segment at 15-37 (LLVSSISESAVALIIITIRILFS) threads the bilayer.

It localises to the membrane. This is an uncharacterized protein from Saccharomyces cerevisiae (strain ATCC 204508 / S288c) (Baker's yeast).